The primary structure comprises 267 residues: Expansin-B10 (267 aa).

The signal sequence occupies residues 1 to 22; it reads MASSCLLLACVVAAAMVSAVSC. Asparagine 32 carries N-linked (GlcNAc...) asparagine glycosylation. Positions 61-167 constitute an Expansin-like EG45 domain; that stretch reads GGACGYKDID…RRVRCKYPGE (107 aa). Cystine bridges form between cysteine 64/cysteine 92, cysteine 95/cysteine 162, and cysteine 100/cysteine 106. The region spanning 181-262 is the Expansin-like CBD domain; that stretch reads NYFAVLVKYV…NWKANALYKS (82 aa). Asparagine 213 carries an N-linked (GlcNAc...) asparagine glycan.

It belongs to the expansin family. Expansin B subfamily.

It localises to the secreted. The protein resides in the cell wall. It is found in the membrane. May cause loosening and extension of plant cell walls by disrupting non-covalent bonding between cellulose microfibrils and matrix glucans. No enzymatic activity has been found. May be required for rapid internodal elongation in deepwater rice during submergence. The protein is Expansin-B10 (EXPB10) of Oryza sativa subsp. japonica (Rice).